A 495-amino-acid chain; its full sequence is Aspartyl/glutamyl-tRNA(Asn/Gln) amidotransferase subunit B (495 aa).

Belongs to the GatB/GatE family. GatB subfamily. As to quaternary structure, heterotrimer of A, B and C subunits.

The catalysed reaction is L-glutamyl-tRNA(Gln) + L-glutamine + ATP + H2O = L-glutaminyl-tRNA(Gln) + L-glutamate + ADP + phosphate + H(+). It carries out the reaction L-aspartyl-tRNA(Asn) + L-glutamine + ATP + H2O = L-asparaginyl-tRNA(Asn) + L-glutamate + ADP + phosphate + 2 H(+). Allows the formation of correctly charged Asn-tRNA(Asn) or Gln-tRNA(Gln) through the transamidation of misacylated Asp-tRNA(Asn) or Glu-tRNA(Gln) in organisms which lack either or both of asparaginyl-tRNA or glutaminyl-tRNA synthetases. The reaction takes place in the presence of glutamine and ATP through an activated phospho-Asp-tRNA(Asn) or phospho-Glu-tRNA(Gln). This Acinetobacter baylyi (strain ATCC 33305 / BD413 / ADP1) protein is Aspartyl/glutamyl-tRNA(Asn/Gln) amidotransferase subunit B.